The chain runs to 434 residues: D-inositol 3-phosphate glycosyltransferase (434 aa).

His-19 contacts 1D-myo-inositol 3-phosphate. UDP-N-acetyl-alpha-D-glucosamine is bound by residues 25-26 and Gly-33; that span reads QP. 1D-myo-inositol 3-phosphate contacts are provided by residues 30–35, Lys-88, Tyr-121, Thr-145, and Arg-165; that span reads DAGGMN. UDP-N-acetyl-alpha-D-glucosamine is bound by residues Arg-239, Lys-244, and Gln-297. Mg(2+) is bound by residues Tyr-306, Arg-307, and Ala-309. UDP-N-acetyl-alpha-D-glucosamine is bound by residues Glu-319 and Glu-327. Mg(2+) is bound at residue Thr-333. Positions 414–434 are disordered; it reads HPRPAARRSGRRFSMRRGVRT.

The protein belongs to the glycosyltransferase group 1 family. MshA subfamily. As to quaternary structure, homodimer.

The catalysed reaction is 1D-myo-inositol 3-phosphate + UDP-N-acetyl-alpha-D-glucosamine = 1D-myo-inositol 2-acetamido-2-deoxy-alpha-D-glucopyranoside 3-phosphate + UDP + H(+). In terms of biological role, catalyzes the transfer of a N-acetyl-glucosamine moiety to 1D-myo-inositol 3-phosphate to produce 1D-myo-inositol 2-acetamido-2-deoxy-glucopyranoside 3-phosphate in the mycothiol biosynthesis pathway. This chain is D-inositol 3-phosphate glycosyltransferase (mshA), found in Mycolicibacterium smegmatis (strain ATCC 700084 / mc(2)155) (Mycobacterium smegmatis).